Reading from the N-terminus, the 444-residue chain is Exodeoxyribonuclease 7 large subunit (444 aa).

The protein belongs to the XseA family. In terms of assembly, heterooligomer composed of large and small subunits.

Its subcellular location is the cytoplasm. It carries out the reaction Exonucleolytic cleavage in either 5'- to 3'- or 3'- to 5'-direction to yield nucleoside 5'-phosphates.. Bidirectionally degrades single-stranded DNA into large acid-insoluble oligonucleotides, which are then degraded further into small acid-soluble oligonucleotides. The polypeptide is Exodeoxyribonuclease 7 large subunit (Rickettsia conorii (strain ATCC VR-613 / Malish 7)).